Here is a 45-residue protein sequence, read N- to C-terminus: Large ribosomal subunit protein bL34 (45 aa).

The protein belongs to the bacterial ribosomal protein bL34 family.

This is Large ribosomal subunit protein bL34 from Kocuria rhizophila (strain ATCC 9341 / DSM 348 / NBRC 103217 / DC2201).